A 251-amino-acid chain; its full sequence is Hydroxyacylglutathione hydrolase (251 aa).

H53, H55, D57, H58, H110, D127, and H165 together coordinate Zn(2+).

The protein belongs to the metallo-beta-lactamase superfamily. Glyoxalase II family. Monomer. Requires Zn(2+) as cofactor.

The enzyme catalyses an S-(2-hydroxyacyl)glutathione + H2O = a 2-hydroxy carboxylate + glutathione + H(+). It functions in the pathway secondary metabolite metabolism; methylglyoxal degradation; (R)-lactate from methylglyoxal: step 2/2. In terms of biological role, thiolesterase that catalyzes the hydrolysis of S-D-lactoyl-glutathione to form glutathione and D-lactic acid. In Salmonella paratyphi A (strain ATCC 9150 / SARB42), this protein is Hydroxyacylglutathione hydrolase.